The primary structure comprises 891 residues: DNA mismatch repair protein MutS (891 aa).

634-641 (GPNMGGKS) provides a ligand contact to ATP.

Belongs to the DNA mismatch repair MutS family.

In terms of biological role, this protein is involved in the repair of mismatches in DNA. It is possible that it carries out the mismatch recognition step. This protein has a weak ATPase activity. The protein is DNA mismatch repair protein MutS of Burkholderia pseudomallei (strain 1106a).